We begin with the raw amino-acid sequence, 826 residues long: Dolichyl-diphosphooligosaccharide--protein glycosyltransferase subunit STT3B (826 aa).

Positions 1–60 are disordered; sequence MAEPSAPESKHKSSLNSSPWSGLMALGNSRHGHHGPGAQCAHKAAGGVAPPKPAPAGLSG. A2 carries the N-acetylalanine modification. Residues 2–41 are Cytoplasmic-facing; that stretch reads AEPSAPESKHKSSLNSSPWSGLMALGNSRHGHHGPGAQCA. 3 positions are modified to phosphoserine: S13, S18, and S29. The helical transmembrane segment at 42–86 threads the bilayer; it reads HKAAGGVAPPKPAPAGLSGGLSQPAGWQSLLSFTILFLAWLAGFS. The Lumenal portion of the chain corresponds to 87 to 173; the sequence is SRLFAVIRFE…VHIRDVCVFL (87 aa). The DXD motif 1 motif lies at 101–103; that stretch reads EFD. Mn(2+) is bound at residue D103. A helical transmembrane segment spans residues 174-192; it reads APTFSGLTSISTFLLTREL. Topologically, residues 193–194 are cytoplasmic; that stretch reads WN. The chain crosses the membrane as a helical span at residues 195-212; the sequence is QGAGLLAACFIAIVPGYI. Over 213 to 223 the chain is Lumenal; that stretch reads SRSVAGSFDNE. 2 residues coordinate Mn(2+): D221 and E223. A DXD motif 2 motif is present at residues 221-223; it reads DNE. Residues 224-243 traverse the membrane as a helical segment; sequence GIAIFALQFTYYLWVKSVKT. Residues 244 to 245 lie on the Cytoplasmic side of the membrane; the sequence is GS. The helical transmembrane segment at 246–260 threads the bilayer; that stretch reads VFWTMCCCLSYFYMV. Residues 261–265 lie on the Lumenal side of the membrane; sequence SAWGG. A helical membrane pass occupies residues 266–282; the sequence is YVFIINLIPLHVFVLLL. At 283 to 287 the chain is on the cytoplasmic side; that stretch reads MQRYS. Residues 288–313 form a helical membrane-spanning segment; the sequence is KRVYIAYSTFYIVGLILSMQIPFVGF. The Lumenal segment spans residues 314–321; that stretch reads QPIRTSEH. Residues 322–341 form a helical membrane-spanning segment; the sequence is MAAAGVFALLQAYAFLQYLR. Residues 342-350 lie on the Cytoplasmic side of the membrane; it reads DRLTKQEFQ. The helical transmembrane segment at 351–371 threads the bilayer; the sequence is TLFFLGVSLAAGAVFLSVIYL. Over 372–410 the chain is Lumenal; the sequence is TYTGYIAPWSGRFYSLWDTGYAKIHIPIIASVSEHQPTT. An SVSE motif motif is present at residues 402–405; it reads SVSE. A helical transmembrane segment spans residues 411 to 433; the sequence is WVSFFFDLHILVCTFPAGLWFCI. At 434–439 the chain is on the cytoplasmic side; the sequence is KNINDE. Residues 440 to 456 form a helical membrane-spanning segment; that stretch reads RVFVALYAISAVYFAGV. Topologically, residues 457 to 460 are lumenal; the sequence is MVRL. Dolichyl diphosphooligosaccharide is bound at residue R459. A helical membrane pass occupies residues 461-482; that stretch reads MLTLTPVVCMLSAIAFSNVFEH. The Cytoplasmic segment spans residues 483 to 526; that stretch reads YLGDDMKRENPPVEDSSDEDDKRNPGNLYDKAGKVRKHVTEQEK. The segment at 490 to 512 is disordered; it reads RENPPVEDSSDEDDKRNPGNLYD. 2 positions are modified to phosphoserine: S498 and S499. A helical membrane pass occupies residues 527 to 552; the sequence is TEEGLGPNIKSIVTMLMLMLLMMFAV. Over 553–826 the chain is Lumenal; the sequence is HCTWVTSNAY…KGKKISKKTV (274 aa). The segment at 604–606 is interacts with target acceptor peptide in protein substrate; sequence WWD. Positions 604 to 608 match the WWDYG motif motif; sequence WWDYG. Y609 contacts dolichyl diphosphooligosaccharide. 2 N-linked (GlcNAc...) asparagine glycosylation sites follow: N616 and N623. An N-linked (GlcNAc...) (high mannose) asparagine glycan is attached at N627. N641 is a glycosylation site (N-linked (GlcNAc...) asparagine). The DK motif signature appears at 671 to 678; it reads DINKFLWM.

It belongs to the STT3 family. Component of the oligosaccharyltransferase (OST) complex. There are 2 OST complexes, OST-A and OST-B, which contain STT3A or STT3B as catalytic subunit, respectively. OST-A and OST-B contain common core subunits RPN1, RPN2, OST48, OST4, DAD1 and TMEM258, and OST-B contains either MAGT1 or TUSC3 as specific accessory subunit. It depends on Mg(2+) as a cofactor. Requires Mn(2+) as cofactor.

It is found in the endoplasmic reticulum. Its subcellular location is the endoplasmic reticulum membrane. It carries out the reaction a di-trans,poly-cis-dolichyl diphosphooligosaccharide + L-asparaginyl-[protein] = N(4)-(oligosaccharide-(1-&gt;4)-N-acetyl-beta-D-glucosaminyl-(1-&gt;4)-N-acetyl-beta-D-glucosaminyl)-L-asparaginyl-[protein] + a di-trans,poly-cis-dolichyl diphosphate + H(+). It participates in protein modification; protein glycosylation. Its function is as follows. Catalytic subunit of the oligosaccharyl transferase (OST) complex that catalyzes the initial transfer of a defined glycan (Glc(3)Man(9)GlcNAc(2) in eukaryotes) from the lipid carrier dolichol-pyrophosphate to an asparagine residue within an Asn-X-Ser/Thr consensus motif in nascent polypeptide chains, the first step in protein N-glycosylation. N-glycosylation occurs cotranslationally and the complex associates with the Sec61 complex at the channel-forming translocon complex that mediates protein translocation across the endoplasmic reticulum (ER). All subunits are required for a maximal enzyme activity. This subunit contains the active site and the acceptor peptide and donor lipid-linked oligosaccharide (LLO) binding pockets. STT3B is present in a small subset of OST complexes and mediates both cotranslational and post-translational N-glycosylation of target proteins: STT3B-containing complexes are required for efficient post-translational glycosylation and while they are less competent than STT3A-containing complexes for cotranslational glycosylation, they have the ability to mediate glycosylation of some nascent sites that are not accessible for STT3A. STT3B-containing complexes also act post-translationally and mediate modification of skipped glycosylation sites in unfolded proteins. Plays a role in ER-associated degradation (ERAD) pathway that mediates ubiquitin-dependent degradation of misfolded endoplasmic reticulum proteins by mediating N-glycosylation of unfolded proteins, which are then recognized by the ERAD pathway and targeted for degradation. The protein is Dolichyl-diphosphooligosaccharide--protein glycosyltransferase subunit STT3B of Canis lupus familiaris (Dog).